A 255-amino-acid chain; its full sequence is UDP-2,3-diacylglucosamine hydrolase (255 aa).

Residues Asp-8, His-10, Asp-41, Asn-79, and His-114 each contribute to the Mn(2+) site. 79-80 is a binding site for substrate; sequence NR. Positions 122, 160, 164, 167, and 195 each coordinate substrate. Mn(2+)-binding residues include His-195 and His-197.

Belongs to the LpxH family. The cofactor is Mn(2+).

It localises to the cell inner membrane. The catalysed reaction is UDP-2-N,3-O-bis[(3R)-3-hydroxytetradecanoyl]-alpha-D-glucosamine + H2O = 2-N,3-O-bis[(3R)-3-hydroxytetradecanoyl]-alpha-D-glucosaminyl 1-phosphate + UMP + 2 H(+). Its pathway is glycolipid biosynthesis; lipid IV(A) biosynthesis; lipid IV(A) from (3R)-3-hydroxytetradecanoyl-[acyl-carrier-protein] and UDP-N-acetyl-alpha-D-glucosamine: step 4/6. Its function is as follows. Hydrolyzes the pyrophosphate bond of UDP-2,3-diacylglucosamine to yield 2,3-diacylglucosamine 1-phosphate (lipid X) and UMP by catalyzing the attack of water at the alpha-P atom. Involved in the biosynthesis of lipid A, a phosphorylated glycolipid that anchors the lipopolysaccharide to the outer membrane of the cell. The chain is UDP-2,3-diacylglucosamine hydrolase from Hamiltonella defensa subsp. Acyrthosiphon pisum (strain 5AT).